A 243-amino-acid polypeptide reads, in one-letter code: Segregation and condensation protein A (243 aa).

It belongs to the ScpA family. Component of a cohesin-like complex composed of ScpA, ScpB and the Smc homodimer, in which ScpA and ScpB bind to the head domain of Smc. The presence of the three proteins is required for the association of the complex with DNA.

It is found in the cytoplasm. Participates in chromosomal partition during cell division. May act via the formation of a condensin-like complex containing Smc and ScpB that pull DNA away from mid-cell into both cell halves. The polypeptide is Segregation and condensation protein A (Halothermothrix orenii (strain H 168 / OCM 544 / DSM 9562)).